A 257-amino-acid polypeptide reads, in one-letter code: MRHLDFVLSPLDQFEVRDLFSLNANLLGNLHLSLTNIGLYLTISIFLILTYSLLATNNNKIIPNNWSISQESIYATVHGIVVNQINPNKGQMFFPLMYVLFIFILVNNLIGLVPYSFASTSHFILTFSISFTVVLGATILGFQRHGLKFFSLFVPSGCPLALLPLLVLIEFISYLSRNVSLGLRLAANILSGHMLLSILSGFTYNIMTSGIIFFILGLIPLAFIIAFSGLELAIAFIQAQVFVVLACSYIKDGLDLH.

A propeptide spans 1–8 (MRHLDFVL) (removed in mature form). A run of 7 helical transmembrane segments spans residues 34–54 (LTNI…YSLL), 93–113 (FFPL…IGLV), 122–142 (HFIL…ILGF), 149–169 (FFSL…LVLI), 187–207 (ANIL…YNIM), 210–230 (GIIF…FSGL), and 231–251 (ELAI…SYIK).

It belongs to the ATPase A chain family. As to quaternary structure, F-type ATPases have 2 components, CF(1) - the catalytic core - and CF(0) - the membrane proton channel. CF(1) has five subunits: alpha(3), beta(3), gamma(1), delta(1), epsilon(1). CF(0) has three main subunits: a, b and c.

The protein resides in the mitochondrion inner membrane. Its function is as follows. Mitochondrial membrane ATP synthase (F(1)F(0) ATP synthase or Complex V) produces ATP from ADP in the presence of a proton gradient across the membrane which is generated by electron transport complexes of the respiratory chain. F-type ATPases consist of two structural domains, F(1) - containing the extramembraneous catalytic core and F(0) - containing the membrane proton channel, linked together by a central stalk and a peripheral stalk. During catalysis, ATP synthesis in the catalytic domain of F(1) is coupled via a rotary mechanism of the central stalk subunits to proton translocation. Key component of the proton channel; it may play a direct role in the translocation of protons across the membrane. In Penicillium chrysogenum (Penicillium notatum), this protein is ATP synthase subunit a (atp6).